The chain runs to 344 residues: Dihydroorotase (344 aa).

Zn(2+) is bound by residues histidine 14 and histidine 16. Residues 16-18 (HLR) and asparagine 42 contribute to the substrate site. 3 residues coordinate Zn(2+): lysine 100, histidine 137, and histidine 175. At lysine 100 the chain carries N6-carboxylysine. Histidine 137 serves as a coordination point for substrate. Leucine 220 contacts substrate. Aspartate 248 provides a ligand contact to Zn(2+). Residue aspartate 248 is part of the active site. Positions 252 and 264 each coordinate substrate.

It belongs to the metallo-dependent hydrolases superfamily. DHOase family. Class II DHOase subfamily. In terms of assembly, homodimer. Requires Zn(2+) as cofactor.

It carries out the reaction (S)-dihydroorotate + H2O = N-carbamoyl-L-aspartate + H(+). It participates in pyrimidine metabolism; UMP biosynthesis via de novo pathway; (S)-dihydroorotate from bicarbonate: step 3/3. In terms of biological role, catalyzes the reversible cyclization of carbamoyl aspartate to dihydroorotate. The sequence is that of Dihydroorotase from Roseobacter denitrificans (strain ATCC 33942 / OCh 114) (Erythrobacter sp. (strain OCh 114)).